Consider the following 247-residue polypeptide: uncharacterized protein (247 aa).

This is an uncharacterized protein from Acanthamoeba polyphaga (Amoeba).